Here is a 616-residue protein sequence, read N- to C-terminus: Angiotensin-converting enzyme (616 aa).

Residues 1–23 (MNLINFSYLNLLFGAGLFSVLES) form the signal peptide. Positions 27-610 (LNTESDAKKW…PRAENWMGGK (584 aa)) constitute a Peptidase M2 domain. 2 N-linked (GlcNAc...) asparagine glycosylation sites follow: N61 and N96. C142 and C152 are oxidised to a cystine. Chloride contacts are provided by R180 and Y218. N303 carries N-linked (GlcNAc...) asparagine glycosylation. A disulfide bridge links C345 with C363. H376 is a binding site for Zn(2+). E377 (proton acceptor) is an active-site residue. Zn(2+) contacts are provided by H380 and E404. N428 is a glycosylation site (N-linked (GlcNAc...) asparagine). Chloride-binding residues include W478 and R482. The Proton donor role is filled by H506. R515 is a chloride binding site. Residues C531 and C543 are joined by a disulfide bond. Residues N535 and N573 are each glycosylated (N-linked (GlcNAc...) asparagine).

The protein belongs to the peptidase M2 family. Zn(2+) is required as a cofactor. Chloride serves as cofactor. As to expression, epithelial cells of the midgut.

Its subcellular location is the secreted. The protein resides in the extracellular space. It carries out the reaction Release of a C-terminal dipeptide, oligopeptide-|-Xaa-Yaa, when Xaa is not Pro, and Yaa is neither Asp nor Glu. Thus, conversion of angiotensin I to angiotensin II, with increase in vasoconstrictor activity, but no action on angiotensin II.. Activated by chloride. Inhibited by captopril and lisinopril, and to a lesser extent by delaprilat. This chain is Angiotensin-converting enzyme (ACE), found in Theromyzon tessulatum (Duck leech).